A 402-amino-acid chain; its full sequence is Plasminogen activator inhibitor 1 (402 aa).

A signal peptide spans 1–22; it reads MQMSSALACLILGLVLVSGKGF. Residues asparagine 232, asparagine 288, and asparagine 352 are each glycosylated (N-linked (GlcNAc...) asparagine).

This sequence belongs to the serpin family. Forms a heterodimer with TMPRSS7. Interacts with VTN. Binds LRP1B; binding is followed by internalization and degradation. Interacts with PPP1CB. In complex with PLAU/uPA, interacts with PLAUR/uPAR. Interacts with SORL1 and LRP1, either alone or in complex with PLAU; these interactions are abolished in the presence of LRPAP1/RAP. The ternary complex composed of PLAUR-PLAU-PAI1 also interacts with SORL1. Interacts with PLAT/tPA. Also interacts with SORL1, when complexed to PLAT/tPA.

It is found in the secreted. In terms of biological role, serine protease inhibitor. Inhibits TMPRSS7. Is a primary inhibitor of tissue-type plasminogen activator (PLAT) and urokinase-type plasminogen activator (PLAU). As PLAT inhibitor, it is required for fibrinolysis down-regulation and is responsible for the controlled degradation of blood clots. As PLAU inhibitor, it is involved in the regulation of cell adhesion and spreading. Acts as a regulator of cell migration, independently of its role as protease inhibitor. It is required for stimulation of keratinocyte migration during cutaneous injury repair. Involved in cellular and replicative senescence. Plays a role in alveolar type 2 cells senescence in the lung. Is involved in the regulation of cementogenic differentiation of periodontal ligament stem cells, and regulates odontoblast differentiation and dentin formation during odontogenesis. This chain is Plasminogen activator inhibitor 1 (Serpine1), found in Mus musculus (Mouse).